The chain runs to 161 residues: Ubiquitin D (161 aa).

Ubiquitin-like domains lie at 3-77 and 86-159; these read SCVC…LKVV and LSLV…AHCI.

Belongs to the ubiquitin D family. In terms of assembly, interacts directly with the 26S proteasome. Interacts with NUB1; this interaction facilitates the linking of UBD-conjugated target protein to the proteasome complex and accelerates its own degradation and that of its conjugates. Interacts (via ubiquitin-like 1 domain) with the spindle checkpoint protein MAD2L1 during mitosis. Present in aggresomes of proteasome inhibited cells. Interacts with HDAC6 under proteasome impairment conditions. Forms a thioester with UBA6 in cells stimulated with tumor necrosis factor-alpha (TNFa) and interferon-gamma (IFNg). Interacts with SQSTM1 and TP53/p53. Can be acetylated.

It localises to the nucleus. The protein resides in the cytoplasm. In terms of biological role, ubiquitin-like protein modifier which can be covalently attached to target proteins and subsequently leads to their degradation by the 26S proteasome, in a NUB1-dependent manner. Conjugation to the target protein is activated by UBA6 via adenylation of its C-terminal glycine. Probably functions as a survival factor. Promotes the expression of the proteasome subunit beta type-9 (PSMB9/LMP2). Regulates TNF-alpha-induced and LPS-mediated activation of the central mediator of innate immunity NF-kappa-B by promoting TNF-alpha-mediated proteasomal degradation of ubiquitinated-I-kappa-B-alpha. Required for TNF-alpha-induced p65 nuclear translocation in renal tubular epithelial cells (RTECs). May be involved in dendritic cell (DC) maturation, the process by which immature dendritic cells differentiate into fully competent antigen-presenting cells that initiate T-cell responses. Mediates mitotic non-disjunction and chromosome instability, in long-term in vitro culture and cancers, by abbreviating mitotic phase and impairing the kinetochore localization of MAD2L1 during the prometaphase stage of the cell cycle. May be involved in the formation of aggresomes when proteasome is saturated or impaired. Mediates apoptosis in a caspase-dependent manner, especially in renal epithelium and tubular cells during renal diseases. This Rattus norvegicus (Rat) protein is Ubiquitin D (Ubd).